The sequence spans 681 residues: Macrolide export ATP-binding/permease protein MacB (681 aa).

Residues 6 to 244 (LKLAAVTRRF…FAEVGVGAAA (239 aa)) enclose the ABC transporter domain. 42–49 (GASGSGKS) serves as a coordination point for ATP. The interval 246–274 (TETAADTRSAPASGDAPPPANNDTAADPA) is disordered. The next 4 membrane-spanning stretches (helical) occupy residues 306-326 (LLTM…VAVG), 554-574 (LTLL…IGVM), 611-631 (LVCL…GALF), and 644-664 (AGAI…FGFM).

The protein belongs to the ABC transporter superfamily. Macrolide exporter (TC 3.A.1.122) family. In terms of assembly, homodimer.

The protein resides in the cell inner membrane. Non-canonical ABC transporter that contains transmembrane domains (TMD), which form a pore in the inner membrane, and an ATP-binding domain (NBD), which is responsible for energy generation. Confers resistance against macrolides. The sequence is that of Macrolide export ATP-binding/permease protein MacB from Burkholderia cenocepacia (strain HI2424).